A 261-amino-acid chain; its full sequence is Lysosomal-associated transmembrane protein 5 (261 aa).

The next 5 membrane-spanning stretches (helical) occupy residues 21-41 (TIAL…EHVV), 65-85 (SSFL…FGVV), 92-112 (LIPF…TLLG), 133-153 (VPLM…LCSS), and 183-203 (FINM…LKVY). Positions 242 to 261 (LSLPPKTPEGDPAPPPYSEV) are disordered. Residues 246-261 (PKTPEGDPAPPPYSEV) are compositionally biased toward pro residues. At Tyr-258 the chain carries Phosphotyrosine.

Belongs to the LAPTM4/LAPTM5 transporter family. Binds to ubiquitin. Preferentially expressed in adult hematopoietic tissues. High levels in lymphoid and myeloid tissues.

Its subcellular location is the lysosome membrane. Functionally, may have a special functional role during embryogenesis and in adult hematopoietic cells. The chain is Lysosomal-associated transmembrane protein 5 (Laptm5) from Mus musculus (Mouse).